Consider the following 87-residue polypeptide: Small ribosomal subunit protein uS17 (87 aa).

It belongs to the universal ribosomal protein uS17 family. As to quaternary structure, part of the 30S ribosomal subunit.

One of the primary rRNA binding proteins, it binds specifically to the 5'-end of 16S ribosomal RNA. This Bacillus pumilus (strain SAFR-032) protein is Small ribosomal subunit protein uS17.